Consider the following 548-residue polypeptide: Dihydroxy-acid dehydratase (548 aa).

A Mg(2+)-binding site is contributed by Asp-78. Residue Cys-119 coordinates [2Fe-2S] cluster. Mg(2+) contacts are provided by Asp-120 and Lys-121. Position 121 is an N6-carboxylysine (Lys-121). Cys-185 serves as a coordination point for [2Fe-2S] cluster. Glu-438 lines the Mg(2+) pocket. Residue Ser-464 is the Proton acceptor of the active site.

The protein belongs to the IlvD/Edd family. In terms of assembly, homodimer. [2Fe-2S] cluster is required as a cofactor. Mg(2+) serves as cofactor.

The enzyme catalyses (2R)-2,3-dihydroxy-3-methylbutanoate = 3-methyl-2-oxobutanoate + H2O. It catalyses the reaction (2R,3R)-2,3-dihydroxy-3-methylpentanoate = (S)-3-methyl-2-oxopentanoate + H2O. The protein operates within amino-acid biosynthesis; L-isoleucine biosynthesis; L-isoleucine from 2-oxobutanoate: step 3/4. It participates in amino-acid biosynthesis; L-valine biosynthesis; L-valine from pyruvate: step 3/4. Functionally, functions in the biosynthesis of branched-chain amino acids. Catalyzes the dehydration of (2R,3R)-2,3-dihydroxy-3-methylpentanoate (2,3-dihydroxy-3-methylvalerate) into 2-oxo-3-methylpentanoate (2-oxo-3-methylvalerate) and of (2R)-2,3-dihydroxy-3-methylbutanoate (2,3-dihydroxyisovalerate) into 2-oxo-3-methylbutanoate (2-oxoisovalerate), the penultimate precursor to L-isoleucine and L-valine, respectively. This Methanothrix thermoacetophila (strain DSM 6194 / JCM 14653 / NBRC 101360 / PT) (Methanosaeta thermophila) protein is Dihydroxy-acid dehydratase.